Here is a 315-residue protein sequence, read N- to C-terminus: Methionyl-tRNA formyltransferase (315 aa).

113–116 (SLLP) contacts (6S)-5,6,7,8-tetrahydrofolate.

This sequence belongs to the Fmt family.

The enzyme catalyses L-methionyl-tRNA(fMet) + (6R)-10-formyltetrahydrofolate = N-formyl-L-methionyl-tRNA(fMet) + (6S)-5,6,7,8-tetrahydrofolate + H(+). Its function is as follows. Attaches a formyl group to the free amino group of methionyl-tRNA(fMet). The formyl group appears to play a dual role in the initiator identity of N-formylmethionyl-tRNA by promoting its recognition by IF2 and preventing the misappropriation of this tRNA by the elongation apparatus. The polypeptide is Methionyl-tRNA formyltransferase (Escherichia fergusonii (strain ATCC 35469 / DSM 13698 / CCUG 18766 / IAM 14443 / JCM 21226 / LMG 7866 / NBRC 102419 / NCTC 12128 / CDC 0568-73)).